The chain runs to 690 residues: Highly divergent homeobox (690 aa).

A DNA-binding region (homeobox 1) is located at residues 3 to 63; the sequence is LRSVFTVEQQ…NKRRKMSSKN (61 aa). Disordered regions lie at residues 55 to 76 and 112 to 132; these read KRRK…TSLS and SPAS…QITE. The segment covering 64 to 76 has biased composition (low complexity); the sequence is SESGTATTGTSLS. Residues 113 to 123 are compositionally biased toward polar residues; sequence PASSSSRQGTN. Glycyl lysine isopeptide (Lys-Gly) (interchain with G-Cter in SUMO2) cross-links involve residues Lys135, Lys140, Lys144, Lys163, Lys172, Lys194, Lys212, Lys221, and Lys232. The segment at residues 435–498 is a DNA-binding region (homeobox 2); the sequence is ALQDRTQFSD…NRRRKYRLMG (64 aa). A disordered region spans residues 501-539; the sequence is VPPPRGGPADFSEQPESGSLSALTPGEEAGPEVGEDNDR. Lys613 is covalently cross-linked (Glycyl lysine isopeptide (Lys-Gly) (interchain with G-Cter in SUMO2)). The interval 664 to 690 is disordered; the sequence is FNHASLEPDDTSFSVSSLSEKNVSESL. A compositionally biased stretch (polar residues) spans 674–690; it reads TSFSVSSLSEKNVSESL.

The protein localises to the nucleus. This chain is Highly divergent homeobox (HDX), found in Homo sapiens (Human).